Here is a 215-residue protein sequence, read N- to C-terminus: Cytochrome b6 (215 aa).

A helical membrane pass occupies residues 32-52; sequence IFYCLGGITLTCFLVQVATGF. Cys-35 is a heme c binding site. Residues His-86 and His-100 each contribute to the heme b site. 3 consecutive transmembrane segments (helical) span residues 90–110, 116–136, and 186–206; these read ASMMVLMMILHVFRVYLTGGF, LTWVTGVVLAVLTASFGVTGY, and LHTFVLPLLTAVFMLMHFLMI. 2 residues coordinate heme b: His-187 and His-202.

The protein belongs to the cytochrome b family. PetB subfamily. In terms of assembly, the 4 large subunits of the cytochrome b6-f complex are cytochrome b6, subunit IV (17 kDa polypeptide, PetD), cytochrome f and the Rieske protein, while the 4 small subunits are PetG, PetL, PetM and PetN. The complex functions as a dimer. Heme b is required as a cofactor. Heme c serves as cofactor.

Its subcellular location is the plastid. The protein resides in the chloroplast thylakoid membrane. Component of the cytochrome b6-f complex, which mediates electron transfer between photosystem II (PSII) and photosystem I (PSI), cyclic electron flow around PSI, and state transitions. The polypeptide is Cytochrome b6 (Nicotiana tabacum (Common tobacco)).